Reading from the N-terminus, the 366-residue chain is Histidinol-phosphate aminotransferase (366 aa).

At K228 the chain carries N6-(pyridoxal phosphate)lysine.

The protein belongs to the class-II pyridoxal-phosphate-dependent aminotransferase family. Histidinol-phosphate aminotransferase subfamily. Homodimer. It depends on pyridoxal 5'-phosphate as a cofactor.

The enzyme catalyses L-histidinol phosphate + 2-oxoglutarate = 3-(imidazol-4-yl)-2-oxopropyl phosphate + L-glutamate. The protein operates within amino-acid biosynthesis; L-histidine biosynthesis; L-histidine from 5-phospho-alpha-D-ribose 1-diphosphate: step 7/9. This Stutzerimonas stutzeri (Pseudomonas stutzeri) protein is Histidinol-phosphate aminotransferase.